Consider the following 202-residue polypeptide: Phosphatidyl-N-methylethanolamine N-methyltransferase (202 aa).

Residues Met-1–Gln-12 lie on the Lumenal side of the membrane. The segment at residues Asp-13 to Ala-33 is an intramembrane region (helical). Residues Arg-34–Ile-45 lie on the Lumenal side of the membrane. A helical membrane pass occupies residues Phe-46 to Leu-66. The Cytoplasmic segment spans residues Arg-67–Gly-90. A helical membrane pass occupies residues Gly-91–Thr-111. Ala-95–Gly-97 contacts S-adenosyl-L-methionine. Residues Gly-112 to Lys-154 are Lumenal-facing. A helical transmembrane segment spans residues Gly-155 to Lys-175. Topologically, residues Trp-176–Gln-202 are cytoplasmic. Glu-177–Asp-178 is a binding site for S-adenosyl-L-methionine.

Belongs to the class VI-like SAM-binding methyltransferase superfamily. PEMT/PEM2 methyltransferase family.

It localises to the endoplasmic reticulum membrane. The protein resides in the mitochondrion membrane. The catalysed reaction is a 1,2-diacyl-sn-glycero-3-phospho-N-methylethanolamine + S-adenosyl-L-methionine = a 1,2-diacyl-sn-glycero-3-phospho-N,N-dimethylethanolamine + S-adenosyl-L-homocysteine + H(+). It catalyses the reaction a 1,2-diacyl-sn-glycero-3-phospho-N,N-dimethylethanolamine + S-adenosyl-L-methionine = a 1,2-diacyl-sn-glycero-3-phosphocholine + S-adenosyl-L-homocysteine + H(+). The protein operates within phospholipid metabolism; phosphatidylcholine biosynthesis. Its function is as follows. Catalyzes the second two steps of the methylation pathway of phosphatidylcholine biosynthesis, the SAM-dependent methylation of phosphatidylmonomethylethanolamine (PMME) to phosphatidyldimethylethanolamine (PDME) and of PDME to phosphatidylcholine (PC). The protein is Phosphatidyl-N-methylethanolamine N-methyltransferase of Emericella nidulans (strain FGSC A4 / ATCC 38163 / CBS 112.46 / NRRL 194 / M139) (Aspergillus nidulans).